Consider the following 346-residue polypeptide: Nicotinate-nucleotide--dimethylbenzimidazole phosphoribosyltransferase (346 aa).

The active-site Proton acceptor is the glutamate 313.

The protein belongs to the CobT family.

It catalyses the reaction 5,6-dimethylbenzimidazole + nicotinate beta-D-ribonucleotide = alpha-ribazole 5'-phosphate + nicotinate + H(+). It participates in nucleoside biosynthesis; alpha-ribazole biosynthesis; alpha-ribazole from 5,6-dimethylbenzimidazole: step 1/2. Functionally, catalyzes the synthesis of alpha-ribazole-5'-phosphate from nicotinate mononucleotide (NAMN) and 5,6-dimethylbenzimidazole (DMB). The protein is Nicotinate-nucleotide--dimethylbenzimidazole phosphoribosyltransferase of Parabacteroides distasonis (strain ATCC 8503 / DSM 20701 / CIP 104284 / JCM 5825 / NCTC 11152).